Consider the following 219-residue polypeptide: MSRISKAEMSKLLSVYFIMGSNNCTKDPLQVLREALEGGITIFQFREKGEGALTGEERICFAKELQAICKEYGVPFIVNDDVELALELDADGVHVGQDDEGITSVREKMGDKIVGVSTHTIEEARWAIENGADYLGVGPIFPTSTKKDTKAVQGTKGLAHFREQGITIPIVGIGGISIENTASVIEAGADGVSVISAISLAESSYESTKKLVEEVSRSL.

4-amino-2-methyl-5-(diphosphooxymethyl)pyrimidine-binding positions include Gln-44–Lys-48 and Asn-79. Mg(2+) contacts are provided by Asp-80 and Asp-99. Residue Ser-117 participates in 4-amino-2-methyl-5-(diphosphooxymethyl)pyrimidine binding. Thr-143 to Thr-145 provides a ligand contact to 2-[(2R,5Z)-2-carboxy-4-methylthiazol-5(2H)-ylidene]ethyl phosphate. Lys-146 lines the 4-amino-2-methyl-5-(diphosphooxymethyl)pyrimidine pocket. Residues Gly-175 and Ile-195 to Ser-196 contribute to the 2-[(2R,5Z)-2-carboxy-4-methylthiazol-5(2H)-ylidene]ethyl phosphate site.

It belongs to the thiamine-phosphate synthase family. The cofactor is Mg(2+).

The catalysed reaction is 2-[(2R,5Z)-2-carboxy-4-methylthiazol-5(2H)-ylidene]ethyl phosphate + 4-amino-2-methyl-5-(diphosphooxymethyl)pyrimidine + 2 H(+) = thiamine phosphate + CO2 + diphosphate. It carries out the reaction 2-(2-carboxy-4-methylthiazol-5-yl)ethyl phosphate + 4-amino-2-methyl-5-(diphosphooxymethyl)pyrimidine + 2 H(+) = thiamine phosphate + CO2 + diphosphate. It catalyses the reaction 4-methyl-5-(2-phosphooxyethyl)-thiazole + 4-amino-2-methyl-5-(diphosphooxymethyl)pyrimidine + H(+) = thiamine phosphate + diphosphate. The protein operates within cofactor biosynthesis; thiamine diphosphate biosynthesis; thiamine phosphate from 4-amino-2-methyl-5-diphosphomethylpyrimidine and 4-methyl-5-(2-phosphoethyl)-thiazole: step 1/1. Functionally, condenses 4-methyl-5-(beta-hydroxyethyl)thiazole monophosphate (THZ-P) and 2-methyl-4-amino-5-hydroxymethyl pyrimidine pyrophosphate (HMP-PP) to form thiamine monophosphate (TMP). The chain is Thiamine-phosphate synthase from Bacillus thuringiensis (strain Al Hakam).